An 834-amino-acid chain; its full sequence is Probable basic-leucine zipper transcription factor D (834 aa).

Residues 83–160 are disordered; sequence NNNNMLNDHS…SNNNSSSEGE (78 aa). The span at 90-111 shows a compositional bias: polar residues; that stretch reads DHSSSPMRVPNSSPSLYNNSIE. The span at 119-157 shows a compositional bias: low complexity; sequence DNSNNNNNNNNNINVNDINVNDINSNSTNNNESNNNSSS. The stretch at 211 to 246 forms a coiled coil; the sequence is SEQQQQQQQQQQQQQQQQQQQQQQQQQHQHLLQEHQ. A disordered region spans residues 378–405; the sequence is VVDPPTHNQEDERNVKKQRRLIKNRESA. One can recognise a bZIP domain in the interval 391 to 454; the sequence is NVKKQRRLIK…KQLAAQNSNS (64 aa). The segment at 393-402 is basic motif; it reads KKQRRLIKNR. Residues 407-414 are leucine-zipper; that stretch reads LSRMRKKI. Disordered regions lie at residues 455 to 504 and 550 to 712; these read NNNS…QQQS and LSMS…KTPQ. Residues 550-595 show a composition bias toward polar residues; that stretch reads LSMSDSESSPQKSLRLSSNHHSLPDGTFNTIPIDQQTTATTNTKSL. 2 stretches are compositionally biased toward low complexity: residues 616–651 and 694–707; these read NNNNNNNNNNNNNNNNNNNNNNNNNNNNNNNNNNNN and TTTTTTTTTTTTST.

This sequence belongs to the bZIP family.

Its subcellular location is the nucleus. Its function is as follows. Probable transcriptional regulator. The polypeptide is Probable basic-leucine zipper transcription factor D (bzpD) (Dictyostelium discoideum (Social amoeba)).